Reading from the N-terminus, the 298-residue chain is Tyrosine recombinase XerC (298 aa).

One can recognise a Core-binding (CB) domain in the interval 2 to 88 (TDLHTDVERY…ALRSFFDWLV (87 aa)). In terms of domain architecture, Tyr recombinase spans 109–288 (HLPKNIDVDD…DFQHLASVYD (180 aa)). Catalysis depends on residues R148, K172, H240, R243, and H266. Y275 (O-(3'-phospho-DNA)-tyrosine intermediate) is an active-site residue.

The protein belongs to the 'phage' integrase family. XerC subfamily. As to quaternary structure, forms a cyclic heterotetrameric complex composed of two molecules of XerC and two molecules of XerD, in which XerC interacts with XerD via its C-terminal region, XerD interacts with XerC via its C-terminal region and so on.

It localises to the cytoplasm. FtsK may regulate the catalytic switch between XerC and XerD in the heterotetrameric complex during the two steps of the recombination process. Site-specific tyrosine recombinase, which acts by catalyzing the cutting and rejoining of the recombining DNA molecules. Binds cooperatively to specific DNA consensus sequences that are separated from XerD binding sites by a short central region, forming the heterotetrameric XerC-XerD complex that recombines DNA substrates. The complex is essential to convert dimers of the bacterial chromosome into monomers to permit their segregation at cell division. It also contributes to the segregational stability of plasmids. In the complex XerC specifically exchanges the top DNA strands. The protein is Tyrosine recombinase XerC of Shigella flexneri serotype 5b (strain 8401).